The following is a 160-amino-acid chain: Nucleotide-binding protein AHA_1129 (160 aa).

This sequence belongs to the YajQ family.

Nucleotide-binding protein. This is Nucleotide-binding protein AHA_1129 from Aeromonas hydrophila subsp. hydrophila (strain ATCC 7966 / DSM 30187 / BCRC 13018 / CCUG 14551 / JCM 1027 / KCTC 2358 / NCIMB 9240 / NCTC 8049).